The sequence spans 600 residues: 1-deoxy-D-xylulose-5-phosphate synthase (600 aa).

Thiamine diphosphate contacts are provided by residues H63 and 104–106 (GHS). Position 135 (D135) interacts with Mg(2+). Thiamine diphosphate-binding positions include 136–137 (GA), N164, Y271, and E352. Mg(2+) is bound at residue N164.

This sequence belongs to the transketolase family. DXPS subfamily. As to quaternary structure, homodimer. Mg(2+) serves as cofactor. The cofactor is thiamine diphosphate.

The catalysed reaction is D-glyceraldehyde 3-phosphate + pyruvate + H(+) = 1-deoxy-D-xylulose 5-phosphate + CO2. It functions in the pathway metabolic intermediate biosynthesis; 1-deoxy-D-xylulose 5-phosphate biosynthesis; 1-deoxy-D-xylulose 5-phosphate from D-glyceraldehyde 3-phosphate and pyruvate: step 1/1. Catalyzes the acyloin condensation reaction between C atoms 2 and 3 of pyruvate and glyceraldehyde 3-phosphate to yield 1-deoxy-D-xylulose-5-phosphate (DXP). In Campylobacter fetus subsp. fetus (strain 82-40), this protein is 1-deoxy-D-xylulose-5-phosphate synthase.